Here is a 271-residue protein sequence, read N- to C-terminus: Tryptophan synthase alpha chain (271 aa).

Residues Glu-51 and Asp-62 each act as proton acceptor in the active site.

This sequence belongs to the TrpA family. As to quaternary structure, tetramer of two alpha and two beta chains.

The catalysed reaction is (1S,2R)-1-C-(indol-3-yl)glycerol 3-phosphate + L-serine = D-glyceraldehyde 3-phosphate + L-tryptophan + H2O. The protein operates within amino-acid biosynthesis; L-tryptophan biosynthesis; L-tryptophan from chorismate: step 5/5. The alpha subunit is responsible for the aldol cleavage of indoleglycerol phosphate to indole and glyceraldehyde 3-phosphate. The sequence is that of Tryptophan synthase alpha chain from Prochlorococcus marinus (strain NATL2A).